The following is a 163-amino-acid chain: Succinate dehydrogenase assembly factor 2-A, mitochondrial (163 aa).

The N-terminal 23 residues, 1-23, are a transit peptide targeting the mitochondrion; the sequence is MLRQLRLTMDISGWIFLPWRRSM.

Belongs to the SDHAF2 family. Interacts with the flavoprotein subunit within the SDH catalytic dimer.

Its subcellular location is the mitochondrion matrix. Its function is as follows. Plays an essential role in the assembly of succinate dehydrogenase (SDH), an enzyme complex (also referred to as respiratory complex II) that is a component of both the tricarboxylic acid (TCA) cycle and the mitochondrial electron transport chain, and which couples the oxidation of succinate to fumarate with the reduction of ubiquinone (coenzyme Q) to ubiquinol. Required for flavinylation (covalent attachment of FAD) of the flavoprotein subunit of the SDH catalytic dimer. This chain is Succinate dehydrogenase assembly factor 2-A, mitochondrial, found in Drosophila sechellia (Fruit fly).